Here is a 515-residue protein sequence, read N- to C-terminus: Protein disulfide-isomerase (515 aa).

Residues 1–22 (MAVVRVRAIVALLCLVAALGLA) form the signal peptide. 2 consecutive Thioredoxin domains span residues 23-139 (EPLE…KRTG) and 351-480 (FLEG…SGGQ). Residues Cys-58, Cys-61, Cys-402, and Cys-405 each act as nucleophile in the active site. Disulfide bonds link Cys-58–Cys-61 and Cys-402–Cys-405. The tract at residues 477–515 (SGGQDGAAADDDLEDLETDEETDLEEGDDDEQKIQKDEL) is disordered. Over residues 484 to 507 (AADDDLEDLETDEETDLEEGDDDE) the composition is skewed to acidic residues. Residues 512–515 (KDEL) carry the Prevents secretion from ER motif.

It belongs to the protein disulfide isomerase family. As to quaternary structure, heterodimer; heterodimerizes with the protein microsomal triglyceride transfer MTTP. Homodimer. Monomers and homotetramers may also occur. Also constitutes the structural subunit of prolyl 4-hydroxylase. Stabilizes this enzyme and retains it in the ER without contributing to the catalytic activity. Binds UBQLN1.

It localises to the endoplasmic reticulum. The protein localises to the endoplasmic reticulum lumen. It is found in the cell membrane. The enzyme catalyses Catalyzes the rearrangement of -S-S- bonds in proteins.. Its function is as follows. This multifunctional protein catalyzes the formation, breakage and rearrangement of disulfide bonds. At the cell surface, seems to act as a reductase that cleaves disulfide bonds of proteins attached to the cell. May therefore cause structural modifications of exofacial proteins. Inside the cell, seems to form/rearrange disulfide bonds of nascent proteins. At high concentrations, functions as a chaperone that inhibits aggregation of misfolded proteins. At low concentrations, facilitates aggregation (anti-chaperone activity). Also acts a structural subunit of various enzymes such as prolyl 4-hydroxylase. This Gallus gallus (Chicken) protein is Protein disulfide-isomerase (P4HB).